Reading from the N-terminus, the 145-residue chain is Arginine repressor (145 aa).

It belongs to the ArgR family.

The protein resides in the cytoplasm. It functions in the pathway amino-acid biosynthesis; L-arginine biosynthesis [regulation]. Its function is as follows. Regulates arginine biosynthesis genes. The chain is Arginine repressor from Streptococcus pyogenes serotype M6 (strain ATCC BAA-946 / MGAS10394).